Reading from the N-terminus, the 231-residue chain is Ion-translocating oxidoreductase complex subunit E (231 aa).

Transmembrane regions (helical) follow at residues Ala18–Ala38, Leu39–Leu59, Thr63–Val83, Leu86–Val106, Ala125–Leu145, and Pro182–Gly202.

The protein belongs to the NqrDE/RnfAE family. As to quaternary structure, the complex is composed of six subunits: RsxA, RsxB, RsxC, RsxD, RsxE and RsxG.

It is found in the cell inner membrane. Part of a membrane-bound complex that couples electron transfer with translocation of ions across the membrane. Required to maintain the reduced state of SoxR. This is Ion-translocating oxidoreductase complex subunit E from Shigella flexneri serotype 5b (strain 8401).